A 128-amino-acid polypeptide reads, in one-letter code: L-ectoine synthase (128 aa).

It belongs to the ectoine synthase family.

The catalysed reaction is (2S)-4-acetamido-2-aminobutanoate = L-ectoine + H2O. It participates in amine and polyamine biosynthesis; ectoine biosynthesis; L-ectoine from L-aspartate 4-semialdehyde: step 3/3. In terms of biological role, catalyzes the circularization of gamma-N-acetyl-alpha,gamma-diaminobutyric acid (ADABA) to ectoine (1,4,5,6-tetrahydro-2-methyl-4-pyrimidine carboxylic acid), which is an excellent osmoprotectant. The sequence is that of L-ectoine synthase from Vibrio campbellii (strain ATCC BAA-1116).